A 510-amino-acid chain; its full sequence is L-2,4-diaminobutyrate decarboxylase (510 aa).

At K319 the chain carries N6-(pyridoxal phosphate)lysine.

Belongs to the group II decarboxylase family. It depends on pyridoxal 5'-phosphate as a cofactor.

It catalyses the reaction L-2,4-diaminobutanoate + H(+) = propane-1,3-diamine + CO2. It participates in amine and polyamine biosynthesis; 1,3-diaminopropane biosynthesis; 1,3-diaminopropane from L-aspartate 4-semialdehyde: step 2/2. The protein is L-2,4-diaminobutyrate decarboxylase (ddc) of Acinetobacter baumannii.